The primary structure comprises 150 residues: Nucleoside diphosphate kinase (150 aa).

6 residues coordinate ATP: lysine 9, phenylalanine 57, arginine 85, threonine 91, arginine 102, and asparagine 112. Histidine 115 serves as the catalytic Pros-phosphohistidine intermediate.

It belongs to the NDK family. Homotetramer. The cofactor is Mg(2+).

It localises to the cytoplasm. The catalysed reaction is a 2'-deoxyribonucleoside 5'-diphosphate + ATP = a 2'-deoxyribonucleoside 5'-triphosphate + ADP. It carries out the reaction a ribonucleoside 5'-diphosphate + ATP = a ribonucleoside 5'-triphosphate + ADP. In terms of biological role, major role in the synthesis of nucleoside triphosphates other than ATP. The ATP gamma phosphate is transferred to the NDP beta phosphate via a ping-pong mechanism, using a phosphorylated active-site intermediate. This chain is Nucleoside diphosphate kinase, found in Thermosynechococcus vestitus (strain NIES-2133 / IAM M-273 / BP-1).